Consider the following 269-residue polypeptide: JmjC domain-containing protein 8 (269 aa).

A signal peptide spans 1-24 (MAAAGRRGLLLLFVLWMMVTVILP). Asn135, Asn145, and Asn214 each carry an N-linked (GlcNAc...) asparagine glycan. The region spanning 136–269 (DTLYFFGDNN…TSVFISTFLG (134 aa)) is the JmjC domain.

Oligomer. Dimer. Interacts with PKM; regulates angiogenesis and metabolism. N-glycosylated.

It is found in the endoplasmic reticulum lumen. It localises to the cytoplasm. In terms of biological role, functions as a positive regulator of TNF-induced NF-kappaB signaling. Regulates angiogenesis and cellular metabolism through interaction with PKM. This is JmjC domain-containing protein 8 from Mus musculus (Mouse).